Consider the following 464-residue polypeptide: Glycine--tRNA ligase (464 aa).

2 residues coordinate substrate: arginine 104 and glutamate 175. ATP-binding positions include 207–209, 217–222, 292–293, and 336–339; these read RNE, FRTREF, EL, and GVNR. Residue 222–226 coordinates substrate; it reads FEQME. Substrate is bound at residue 332–336; that stretch reads EPALG.

This sequence belongs to the class-II aminoacyl-tRNA synthetase family. As to quaternary structure, homodimer.

Its subcellular location is the cytoplasm. The enzyme catalyses tRNA(Gly) + glycine + ATP = glycyl-tRNA(Gly) + AMP + diphosphate. In terms of biological role, catalyzes the attachment of glycine to tRNA(Gly). The polypeptide is Glycine--tRNA ligase (Leptospira interrogans serogroup Icterohaemorrhagiae serovar copenhageni (strain Fiocruz L1-130)).